We begin with the raw amino-acid sequence, 245 residues long: Putative MSV199 domain-containing protein 146R (245 aa).

The GIY-YIG domain maps to 2–97 (RKGYIYVIEN…NTLHGKLKNL (96 aa)).

The chain is Putative MSV199 domain-containing protein 146R from Acheta domesticus (House cricket).